The chain runs to 368 residues: Galanin receptor type 3 (368 aa).

Residues 1–20 (MADAQNISLDSPGSVGAVAV) are Extracellular-facing. N6 carries an N-linked (GlcNAc...) asparagine glycan. A helical transmembrane segment spans residues 21-41 (PVVFALIFLLGTVGNGLVLAV). The Cytoplasmic portion of the chain corresponds to 42 to 57 (LLQPGPSAWQEPGSTT). A helical membrane pass occupies residues 58 to 78 (DLFILNLAVADLCFILCCVPF). The Extracellular segment spans residues 79-96 (QATIYTLDAWLFGALVCK). A disulfide bond links C95 and C172. The chain crosses the membrane as a helical span at residues 97 to 118 (AVHLLIYLTMYASSFTLAAVSV). The Cytoplasmic portion of the chain corresponds to 119–138 (DRYLAVRHPLRSRALRTPRN). A helical membrane pass occupies residues 139-159 (ARAAVGLVWLLAALFSAPYLS). Over 160–184 (YYGTVRYGALELCVPAWEDARRRAL) the chain is Extracellular. Residues 185 to 205 (DVATFAAGYLLPVAVVSLAYG) traverse the membrane as a helical segment. Residues 206–236 (RTLRFLWAAVGPAGAAAAEARRRATGRAGRA) are Cytoplasmic-facing. The chain crosses the membrane as a helical span at residues 237–257 (MLAVAALYALCWGPHHALILC). At 258–259 (FW) the chain is on the extracellular side. Residues 260-280 (YGRFAFSPATYACRLASHCLA) form a helical membrane-spanning segment. Residues 281-368 (YANSCLNPLV…HGGEAARGPE (88 aa)) lie on the Cytoplasmic side of the membrane. Residue C308 is the site of S-palmitoyl cysteine attachment. The tract at residues 317 to 368 (RRALRRVRPASSGPPGCPGDARPSGRLLAGGGQGPEPREGPVHGGEAARGPE) is disordered.

The protein belongs to the G-protein coupled receptor 1 family.

It is found in the cell membrane. Functionally, receptor for the hormone galanin. Receptor for the hormone spexin-1. The sequence is that of Galanin receptor type 3 (GALR3) from Homo sapiens (Human).